Reading from the N-terminus, the 425-residue chain is CAAX prenyl protease 1 homolog (425 aa).

The next 5 membrane-spanning stretches (helical) occupy residues 3 to 23 (LPYL…ETYL), 62 to 80 (FHFI…ILYY), 109 to 129 (LAFL…FSLY), 155 to 175 (GILL…IIVQ), and 188 to 208 (FMFA…APLF). Position 284 (His-284) interacts with Zn(2+). The active site involves Glu-285. His-288 serves as a coordination point for Zn(2+). The next 2 helical transmembrane spans lie at 295-315 (VYSF…YTLV) and 332-352 (VIIG…LLSF). Glu-362 lines the Zn(2+) pocket. The Proton donor role is filled by Asp-366.

The protein belongs to the peptidase M48A family. It depends on Zn(2+) as a cofactor.

It localises to the endoplasmic reticulum membrane. It carries out the reaction Hydrolyzes the peptide bond -P2-(S-farnesyl or geranylgeranyl)C-P1'-P2'-P3'-COOH where P1' and P2' are amino acids with aliphatic side chains and P3' is any C-terminal residue.. Its function is as follows. Proteolytically removes the C-terminal three residues of farnesylated proteins. In Oryza sativa subsp. japonica (Rice), this protein is CAAX prenyl protease 1 homolog (FACE1).